A 178-amino-acid polypeptide reads, in one-letter code: Endothelin-2 (178 aa).

The signal sequence occupies residues 1–24 (MVSVPTTWCSVALALLVALHEGKG). Positions 25-46 (QAAATLEQPASSSHAQGTHLRL) are excised as a propeptide. Intrachain disulfides connect Cys49/Cys63 and Cys51/Cys59. The propeptide occupies 70–178 (VNTPEQTAPY…RSTHSRWRKR (109 aa)). Residues 96-111 (CQCSSARDPACATFCL) are endothelin-like. Positions 159–178 (KRQQEAMREPRSTHSRWRKR) are disordered. The segment covering 160-170 (RQQEAMREPRS) has biased composition (basic and acidic residues).

It belongs to the endothelin/sarafotoxin family. Expressed in lung, but not in placental stem villi vessels or cultured placental villi smooth muscle cells.

The protein localises to the secreted. Functionally, endothelins are endothelium-derived vasoconstrictor peptides. The chain is Endothelin-2 (EDN2) from Homo sapiens (Human).